The primary structure comprises 301 residues: Transposase InsD for insertion element IS2D (301 aa).

Residues 106–289 (KPAVPPSKRA…SPREYLRQRA (184 aa)) form the Integrase catalytic domain.

In terms of biological role, involved in the transposition of the insertion sequence IS2. The chain is Transposase InsD for insertion element IS2D (insD2) from Escherichia coli (strain K12).